Here is a 99-residue protein sequence, read N- to C-terminus: U2-theraphotoxin-Lsp1a (99 aa).

The first 22 residues, 1 to 22 (MNTIQVIIFAVVLVLTVTVGQA), serve as a signal peptide directing secretion. Residues 23–57 (DEDSPEASLLRKLKEAEASLFGQNLEESRNSRQKR) constitute a propeptide that is removed on maturation. Cystine bridges form between cysteine 58/cysteine 73, cysteine 65/cysteine 78, and cysteine 72/cysteine 93.

The protein belongs to the neurotoxin 14 (magi-1) family. 08 (Ltx-4) subfamily. As to expression, expressed by the venom gland.

It localises to the secreted. In terms of biological role, insecticidal neurotoxin. This chain is U2-theraphotoxin-Lsp1a, found in Lasiodora sp. (strain IBSP 8539) (Brazilian salmon pink birdeater).